A 182-amino-acid chain; its full sequence is Ribosome-recycling factor (182 aa).

Residues 136 to 158 (IKKQEKEGDLSEDQSRDEQDQVQ) are disordered.

The protein belongs to the RRF family.

It is found in the cytoplasm. In terms of biological role, responsible for the release of ribosomes from messenger RNA at the termination of protein biosynthesis. May increase the efficiency of translation by recycling ribosomes from one round of translation to another. This Synechococcus sp. (strain CC9311) protein is Ribosome-recycling factor.